Reading from the N-terminus, the 208-residue chain is Small ribosomal subunit protein uS4 (208 aa).

Positions 24 to 52 (GVKPFDVKTKKANKAPGQHGQARGGKQSE) are disordered. In terms of domain architecture, S4 RNA-binding spans 98-160 (SRLDNVVYRM…AKQQLRIKNA (63 aa)).

It belongs to the universal ribosomal protein uS4 family. Part of the 30S ribosomal subunit. Contacts protein S5. The interaction surface between S4 and S5 is involved in control of translational fidelity.

Its function is as follows. One of the primary rRNA binding proteins, it binds directly to 16S rRNA where it nucleates assembly of the body of the 30S subunit. In terms of biological role, with S5 and S12 plays an important role in translational accuracy. This chain is Small ribosomal subunit protein uS4, found in Acinetobacter baumannii (strain ATCC 17978 / DSM 105126 / CIP 53.77 / LMG 1025 / NCDC KC755 / 5377).